The chain runs to 554 residues: Arginine--tRNA ligase (554 aa).

The short motif at 129-139 (ANPTGPLHIGH) is the 'HIGH' region element.

Belongs to the class-I aminoacyl-tRNA synthetase family. As to quaternary structure, monomer.

It is found in the cytoplasm. The catalysed reaction is tRNA(Arg) + L-arginine + ATP = L-arginyl-tRNA(Arg) + AMP + diphosphate. The polypeptide is Arginine--tRNA ligase (Citrifermentans bemidjiense (strain ATCC BAA-1014 / DSM 16622 / JCM 12645 / Bem) (Geobacter bemidjiensis)).